The primary structure comprises 211 residues: tRNA (guanine-N(7)-)-methyltransferase (211 aa).

Residues aspartate 40, glutamate 65, asparagine 92, and aspartate 117 each contribute to the S-adenosyl-L-methionine site. Aspartate 117 is a catalytic residue. Residue lysine 121 coordinates substrate. Residues 123–128 (RHNKRR) form an interaction with RNA region. Aspartate 153 is a substrate binding site.

The protein belongs to the class I-like SAM-binding methyltransferase superfamily. TrmB family.

The enzyme catalyses guanosine(46) in tRNA + S-adenosyl-L-methionine = N(7)-methylguanosine(46) in tRNA + S-adenosyl-L-homocysteine. It functions in the pathway tRNA modification; N(7)-methylguanine-tRNA biosynthesis. Its function is as follows. Catalyzes the formation of N(7)-methylguanine at position 46 (m7G46) in tRNA. This is tRNA (guanine-N(7)-)-methyltransferase from Synechocystis sp. (strain ATCC 27184 / PCC 6803 / Kazusa).